The chain runs to 473 residues: Aspartyl/glutamyl-tRNA(Asn/Gln) amidotransferase subunit B (473 aa).

Belongs to the GatB/GatE family. GatB subfamily. In terms of assembly, heterotrimer of A, B and C subunits.

The catalysed reaction is L-glutamyl-tRNA(Gln) + L-glutamine + ATP + H2O = L-glutaminyl-tRNA(Gln) + L-glutamate + ADP + phosphate + H(+). The enzyme catalyses L-aspartyl-tRNA(Asn) + L-glutamine + ATP + H2O = L-asparaginyl-tRNA(Asn) + L-glutamate + ADP + phosphate + 2 H(+). Its function is as follows. Allows the formation of correctly charged Asn-tRNA(Asn) or Gln-tRNA(Gln) through the transamidation of misacylated Asp-tRNA(Asn) or Glu-tRNA(Gln) in organisms which lack either or both of asparaginyl-tRNA or glutaminyl-tRNA synthetases. The reaction takes place in the presence of glutamine and ATP through an activated phospho-Asp-tRNA(Asn) or phospho-Glu-tRNA(Gln). The polypeptide is Aspartyl/glutamyl-tRNA(Asn/Gln) amidotransferase subunit B (Francisella tularensis subsp. novicida (strain U112)).